We begin with the raw amino-acid sequence, 561 residues long: Sensor histidine kinase BtsS (561 aa).

Over 1–3 (MYD) the chain is Cytoplasmic. The chain crosses the membrane as a helical span at residues 4–24 (FNLVLLLLQQMCVFLVIAWLM). The Periplasmic portion of the chain corresponds to 25-43 (SKTPLFIPLMQVTVRLPHK). Residues 44–64 (FLCYIVFSIFCIMGTWFGLHI) traverse the membrane as a helical segment. Residues 65 to 72 (DDSIANTR) are Cytoplasmic-facing. Residues 73–93 (AIGAVMGGLLGGPVVGGLVGL) form a helical membrane-spanning segment. The Periplasmic segment spans residues 94–108 (TGGLHRYSMGGMTAL). Residues 109 to 129 (SCMISTIVEGLLGGLVHSILI) form a helical membrane-spanning segment. The Cytoplasmic portion of the chain corresponds to 130 to 140 (RRGRTDKVFNP). Residues 141 to 161 (ITAGAVTFVAEMVQMLIILAI) form a helical membrane-spanning segment. Residues 162–170 (ARPYEDAVR) lie on the Periplasmic side of the membrane. Residues 171–191 (LVSNIAAPMMVTNTVGAALFM) form a helical membrane-spanning segment. Over 192–561 (RILLDKRAMF…TLRLPWRDEA (370 aa)) the chain is Cytoplasmic. One can recognise a Histidine kinase domain in the interval 354 to 559 (QILAGQYERQ…RITLRLPWRD (206 aa)).

Autophosphorylated.

The protein resides in the cell inner membrane. It carries out the reaction ATP + protein L-histidine = ADP + protein N-phospho-L-histidine.. Member of the two-component regulatory system BtsS/BtsR. BtsS is a high-affinity receptor for extracellular pyruvate that activates BtsR by phosphorylation. This chain is Sensor histidine kinase BtsS, found in Escherichia coli O6:H1 (strain CFT073 / ATCC 700928 / UPEC).